A 144-amino-acid chain; its full sequence is Cell division protein SepF (144 aa).

The protein belongs to the SepF family. Homodimer. Interacts with FtsZ.

It is found in the cytoplasm. In terms of biological role, cell division protein that is part of the divisome complex and is recruited early to the Z-ring. Probably stimulates Z-ring formation, perhaps through the cross-linking of FtsZ protofilaments. Its function overlaps with FtsA. In Geobacillus sp. (strain WCH70), this protein is Cell division protein SepF.